Reading from the N-terminus, the 327-residue chain is Lipoyl synthase (327 aa).

Residues C66, C71, C77, C92, C96, C99, and S306 each contribute to the [4Fe-4S] cluster site. Residues F78–S295 form the Radical SAM core domain.

Belongs to the radical SAM superfamily. Lipoyl synthase family. It depends on [4Fe-4S] cluster as a cofactor.

It is found in the cytoplasm. The enzyme catalyses [[Fe-S] cluster scaffold protein carrying a second [4Fe-4S](2+) cluster] + N(6)-octanoyl-L-lysyl-[protein] + 2 oxidized [2Fe-2S]-[ferredoxin] + 2 S-adenosyl-L-methionine + 4 H(+) = [[Fe-S] cluster scaffold protein] + N(6)-[(R)-dihydrolipoyl]-L-lysyl-[protein] + 4 Fe(3+) + 2 hydrogen sulfide + 2 5'-deoxyadenosine + 2 L-methionine + 2 reduced [2Fe-2S]-[ferredoxin]. Its pathway is protein modification; protein lipoylation via endogenous pathway; protein N(6)-(lipoyl)lysine from octanoyl-[acyl-carrier-protein]: step 2/2. Functionally, catalyzes the radical-mediated insertion of two sulfur atoms into the C-6 and C-8 positions of the octanoyl moiety bound to the lipoyl domains of lipoate-dependent enzymes, thereby converting the octanoylated domains into lipoylated derivatives. This is Lipoyl synthase from Neisseria meningitidis serogroup A / serotype 4A (strain DSM 15465 / Z2491).